A 520-amino-acid chain; its full sequence is Ribonuclease Y (520 aa).

A helical transmembrane segment spans residues 3-23; that stretch reads IVIVVISILLALIVGIVVGYL. The segment covering 81 to 118 has biased composition (basic and acidic residues); the sequence is RMEAQKQENRLMQKEENLDRKSETLDKRESSLESKEQS. The disordered stretch occupies residues 81-125; the sequence is RMEAQKQENRLMQKEENLDRKSETLDKRESSLESKEQSLTEQQQQ. The 64-residue stretch at 210-273 folds into the KH domain; sequence TVSVVNLPND…EIARMALEKL (64 aa). The HD domain maps to 336 to 429; it reads GLKHSAEVAY…VAAADALSAA (94 aa).

Belongs to the RNase Y family.

It localises to the cell membrane. Functionally, endoribonuclease that initiates mRNA decay. The sequence is that of Ribonuclease Y from Oceanobacillus iheyensis (strain DSM 14371 / CIP 107618 / JCM 11309 / KCTC 3954 / HTE831).